Here is a 109-residue protein sequence, read N- to C-terminus: Cell division protein ZapA (109 aa).

Residues 21 to 99 (PEQQDALNQA…IEQALLEQGR (79 aa)) are a coiled coil.

The protein belongs to the ZapA family. Type 1 subfamily. As to quaternary structure, homodimer. Interacts with FtsZ.

Its subcellular location is the cytoplasm. Its function is as follows. Activator of cell division through the inhibition of FtsZ GTPase activity, therefore promoting FtsZ assembly into bundles of protofilaments necessary for the formation of the division Z ring. It is recruited early at mid-cell but it is not essential for cell division. This is Cell division protein ZapA from Pectobacterium carotovorum subsp. carotovorum (strain PC1).